The sequence spans 247 residues: PF03932 family protein CutC (247 aa).

Belongs to the CutC family.

It localises to the cytoplasm. The chain is PF03932 family protein CutC from Vibrio campbellii (strain ATCC BAA-1116).